The primary structure comprises 452 residues: tRNA modification GTPase MnmE (452 aa).

3 residues coordinate (6S)-5-formyl-5,6,7,8-tetrahydrofolate: Arg-21, Glu-78, and Lys-118. Residues 214-375 (GMKAVIAGRP…LREHLKTSMG (162 aa)) enclose the TrmE-type G domain. Asn-224 serves as a coordination point for K(+). Residues 224–229 (NAGKSS), 243–249 (TNIAGTT), and 268–271 (DTAG) contribute to the GTP site. Ser-228 is a binding site for Mg(2+). Positions 243, 245, and 248 each coordinate K(+). Thr-249 contributes to the Mg(2+) binding site. Lys-452 contributes to the (6S)-5-formyl-5,6,7,8-tetrahydrofolate binding site.

The protein belongs to the TRAFAC class TrmE-Era-EngA-EngB-Septin-like GTPase superfamily. TrmE GTPase family. Homodimer. Heterotetramer of two MnmE and two MnmG subunits. Requires K(+) as cofactor.

The protein localises to the cytoplasm. Its function is as follows. Exhibits a very high intrinsic GTPase hydrolysis rate. Involved in the addition of a carboxymethylaminomethyl (cmnm) group at the wobble position (U34) of certain tRNAs, forming tRNA-cmnm(5)s(2)U34. The polypeptide is tRNA modification GTPase MnmE (Haemophilus ducreyi (strain 35000HP / ATCC 700724)).